We begin with the raw amino-acid sequence, 154 residues long: uncharacterized protein (154 aa).

The next 4 helical transmembrane spans lie at 15–37, 58–80, 95–116, and 123–145; these read DFSF…ALIT, FAAM…WLWG, LGAL…FAFT, and LVIS…FVPH.

Its subcellular location is the cell membrane. This is an uncharacterized protein from Archaeoglobus fulgidus (strain ATCC 49558 / DSM 4304 / JCM 9628 / NBRC 100126 / VC-16).